A 629-amino-acid chain; its full sequence is Ras GTPase-activating protein gap-1 (629 aa).

In terms of domain architecture, Ras-GAP spans 183–398; sequence DRIRPVLSSL…SVMASFLDNI (216 aa). A PH domain is found at 411 to 507; it reads TVFKFGNLQQ…WLNAIERQRN (97 aa).

The protein resides in the cytoplasm. Its function is as follows. GTPase-activating protein, which inhibits the vulval induction by acting as a negative regulator for the member of the Ras family let-60. Probably decreases the signaling activity of Ras by stimulating its intrinsic GTPase activity, thereby lowering the levels of GTP-bound, active Ras. The sequence is that of Ras GTPase-activating protein gap-1 (gap-1) from Caenorhabditis elegans.